The primary structure comprises 549 residues: MKNINPTQTSAWQALQKHYDEMKDVTIAELFANDSDRFAKFSATFDDLMLVDFSKNRITEETLAKLQDLAKETDLAGAIKSMFSGEKINRTEDRAVLHVALRNRSNTPIIVDGKDVMPEVNAVLEKMKTFSQAIISGQWKGYTGKAITDVVNIGIGGSDLGPFMVTEALRPYKNHLNMHFVSNVDGTHIAEVLKKVNPETTLFLVASKTFTTQETMTNAHSARDWFLKTAGDEKHVAKHFAALSTNVKAVGEFGIDTANMFEFWDWVGGRYSLWSAIGLSIILSVGFDNFVELLSGAHAMDKHFSTTPTEKNLPILLALIGIWYNNFFGAETEAILPYDQYMHRFAAYLQQGNMESNGKYVDRNGNAVDYQTGPIIWGEPGTNGQHAFYQLIHQGTKMVPCDFIAPAITHNPLSDHHQKLLSNFFAQTEALAFGKSREVVEQEYRDQGKDPAQLEHVVPFKVFEGNRPTNSILLREITPFSLGALIALYEHKIFTQGVILNIFTFDQWGVELGKQLANRILPELGDDKAISSHDSSTNGLINRYKAWRA.

Catalysis depends on glutamate 355, which acts as the Proton donor. Active-site residues include histidine 386 and lysine 514.

The protein belongs to the GPI family.

The protein resides in the cytoplasm. The catalysed reaction is alpha-D-glucose 6-phosphate = beta-D-fructose 6-phosphate. Its pathway is carbohydrate biosynthesis; gluconeogenesis. The protein operates within carbohydrate degradation; glycolysis; D-glyceraldehyde 3-phosphate and glycerone phosphate from D-glucose: step 2/4. Catalyzes the reversible isomerization of glucose-6-phosphate to fructose-6-phosphate. This Salmonella choleraesuis (strain SC-B67) protein is Glucose-6-phosphate isomerase.